The chain runs to 129 residues: NADH-quinone oxidoreductase subunit K 2 (129 aa).

Helical transmembrane passes span 3 to 23 (LAYP…GVLA), 28 to 48 (ILVL…LVAF), and 68 to 88 (LFTI…VLAV). Residues 98–129 (DKLRDTAEGPEPDGPGTDGSAPTAAEKAEATA) form a disordered region. Residues 111 to 122 (GPGTDGSAPTAA) are compositionally biased toward low complexity.

The protein belongs to the complex I subunit 4L family. NDH-1 is composed of 14 different subunits. Subunits NuoA, H, J, K, L, M, N constitute the membrane sector of the complex.

It localises to the cell membrane. It catalyses the reaction a quinone + NADH + 5 H(+)(in) = a quinol + NAD(+) + 4 H(+)(out). Its function is as follows. NDH-1 shuttles electrons from NADH, via FMN and iron-sulfur (Fe-S) centers, to quinones in the respiratory chain. The immediate electron acceptor for the enzyme in this species is believed to be a menaquinone. Couples the redox reaction to proton translocation (for every two electrons transferred, four hydrogen ions are translocated across the cytoplasmic membrane), and thus conserves the redox energy in a proton gradient. This is NADH-quinone oxidoreductase subunit K 2 from Streptomyces avermitilis (strain ATCC 31267 / DSM 46492 / JCM 5070 / NBRC 14893 / NCIMB 12804 / NRRL 8165 / MA-4680).